The chain runs to 155 residues: SsrA-binding protein (155 aa).

It belongs to the SmpB family.

It localises to the cytoplasm. In terms of biological role, required for rescue of stalled ribosomes mediated by trans-translation. Binds to transfer-messenger RNA (tmRNA), required for stable association of tmRNA with ribosomes. tmRNA and SmpB together mimic tRNA shape, replacing the anticodon stem-loop with SmpB. tmRNA is encoded by the ssrA gene; the 2 termini fold to resemble tRNA(Ala) and it encodes a 'tag peptide', a short internal open reading frame. During trans-translation Ala-aminoacylated tmRNA acts like a tRNA, entering the A-site of stalled ribosomes, displacing the stalled mRNA. The ribosome then switches to translate the ORF on the tmRNA; the nascent peptide is terminated with the 'tag peptide' encoded by the tmRNA and targeted for degradation. The ribosome is freed to recommence translation, which seems to be the essential function of trans-translation. The sequence is that of SsrA-binding protein from Clostridium acetobutylicum (strain ATCC 824 / DSM 792 / JCM 1419 / IAM 19013 / LMG 5710 / NBRC 13948 / NRRL B-527 / VKM B-1787 / 2291 / W).